A 970-amino-acid polypeptide reads, in one-letter code: MPEQNSIRIRGARQHNLKNVNLDLPRDRLIVFTGVSGSGKSSLAFDTIFAEGQRRYVESLSAYARQFLGQLDKPDVDSIEGLSPAISIDQKSTSHNPRSTVGTVTEIYDYLRLLFGRAGSPHCPHCQRNIAPQTIDQMCDRVMELPDRTKFQILAPVVKGKKGTHVQLLSSLVSQGFVRVRINGEVRELSDNIELKKNQAHTIEIVIDRLIKKEGLQERLVDSLSTCLKQAEGTAIIDILDKPTLAVLDGGKKDDKEALKAAENGQAYHAELPKEIIFSENFACPEHGAVMDELSPRLFSFNSPYGACPDCHGIGFVRSFCPDLVIPDPEKPVYVAIAPWSEKDNSYYLSLLYSLGQHFDFQLQTPWKKLTKEQKEIILYGTEEEIWFEGESRYRNKQGYYRRFAGALNILQKNYDETNSDAIKQKLEKYIINQPCHTCGGKRLKPEALAVKLGQYNINNLTSVPIRQTLERIENLELTSRQAMIGELALKEIKARLQFLLDVGLDYLTLDRAAMTLSGGEAQRIRLATQIGSGLTGVLYVLDEPSIGLHQRDNNRLLATLTKLRDLGNTLIVVEHDEDTIRHADYIVDIGPKAGIHGGEIVCQGDFQTLLKNQRSLTGAYLSGREAIATPEERRNGNGAKLTLQGCCHNNLRNIDVTIPLGKLVCVTGVSGSGKSTLVNELLHPALQHYLSRQVAFPKNLGEITGLQAIDKVIVIDQSPIGRTPRSNPATYTGIFDSIREIFTQTIEAKARGYKPGQFSFNVKGGRCEACAGQGVNVIEMNFLPDVYVQCDVCKGARYNRETLQVKYKGHSIADVLAMTTEEALTVFENIPRAVNRLQTLVDVGLGYIKLGQPAPTLSGGEAQRVKLASELSRRATGKTLYLIDEPTTGLSFYDVHHLLNVLQRLVDKGNSVLVIEHNLDVIRCSDWIIDLGPEGGDRGGKIMVAGTPETVAQHPSSYTGKYLAKVLQS.

Gly34 to Ser41 provides a ligand contact to ATP. The C4-type zinc-finger motif lies at Cys284–Cys311. 2 ABC transporter domains span residues Trp340–Leu617 and Gly637–Ala965. Residue Gly669 to Ser676 coordinates ATP. The segment at Cys768–Cys794 adopts a C4-type zinc-finger fold.

It belongs to the ABC transporter superfamily. UvrA family. In terms of assembly, forms a heterotetramer with UvrB during the search for lesions.

It localises to the cytoplasm. The UvrABC repair system catalyzes the recognition and processing of DNA lesions. UvrA is an ATPase and a DNA-binding protein. A damage recognition complex composed of 2 UvrA and 2 UvrB subunits scans DNA for abnormalities. When the presence of a lesion has been verified by UvrB, the UvrA molecules dissociate. The polypeptide is UvrABC system protein A (Synechocystis sp. (strain ATCC 27184 / PCC 6803 / Kazusa)).